A 35-amino-acid polypeptide reads, in one-letter code: Kappa-theraphotoxin-Gr1b (35 aa).

3 disulfides stabilise this stretch: Cys2–Cys16, Cys9–Cys21, and Cys15–Cys28. The segment at 4 to 6 is involved in active face; that stretch reads YLF.

It belongs to the neurotoxin 10 (Hwtx-1) family. 09 (HaTx) subfamily. Expressed by the venom gland.

It is found in the secreted. In terms of biological role, inhibitor of voltage-gated potassium channels. Inhibits Kv2.1/KCNB1 channels, by shifting activation of the channel to more depolarized voltages. The toxin binding sites may be situated on the S3-S4 extracellular linker of the channel. One, two, three or four toxin molecules may bind the Kv2.1/KCNB1 channel. May need to partition into the membrane in order to bind to the channel. Antibacterial activity is not observed. This chain is Kappa-theraphotoxin-Gr1b, found in Grammostola rosea (Chilean rose tarantula).